Reading from the N-terminus, the 367-residue chain is MMMTAIGLMSGTSLDGVDVALIKTDGRRVGALGPSGYRPYTETERSLLRQALAEAVQLTARDARPGVLAEAERAVTIAHAEAVAAFVAQNRLSPGSVDIVGFHGQTVLHRPAEKLTVQIGDAKALAKAIRIPVVCDFRAADVAAGGQGAPLVPVYHRALAQSLGRDGPIGVINVGGVSNVTYIDGTDTLIACDTGPGNALLDDFMFRTLGKPFDCEGRLASQGVIDQAWLTEALQHPFFAKPTPKSLDRNDFANLTLRDWSPADGAATLTAFTARAIAAVQPLLPKPPQSWIVTGGGARNLTLMRMLREALAPASVESADALGWSADAMEAQAFGFLATRGLKGLPLSYPATTGVAFPMTGGLLARP.

11–18 lines the ATP pocket; that stretch reads GTSLDGVD.

The protein belongs to the anhydro-N-acetylmuramic acid kinase family.

It carries out the reaction 1,6-anhydro-N-acetyl-beta-muramate + ATP + H2O = N-acetyl-D-muramate 6-phosphate + ADP + H(+). It participates in amino-sugar metabolism; 1,6-anhydro-N-acetylmuramate degradation. The protein operates within cell wall biogenesis; peptidoglycan recycling. In terms of biological role, catalyzes the specific phosphorylation of 1,6-anhydro-N-acetylmuramic acid (anhMurNAc) with the simultaneous cleavage of the 1,6-anhydro ring, generating MurNAc-6-P. Is required for the utilization of anhMurNAc either imported from the medium or derived from its own cell wall murein, and thus plays a role in cell wall recycling. The chain is Anhydro-N-acetylmuramic acid kinase from Rhodopseudomonas palustris (strain ATCC BAA-98 / CGA009).